The following is a 136-amino-acid chain: MLQPKRTKFRKVHKGRNRGLAQGTDVSFGTFGLKAVGRGRLTARQIEAARRAMTRAVKRQGKIWIRVFPDKPITEKPLEVRMGKGKGNVEYWVALIQPGKVLYEMDGVPEELAREAFGLAAAKLPIKTTFVTKTVM.

This sequence belongs to the universal ribosomal protein uL16 family. As to quaternary structure, part of the 50S ribosomal subunit.

In terms of biological role, binds 23S rRNA and is also seen to make contacts with the A and possibly P site tRNAs. The protein is Large ribosomal subunit protein uL16 of Enterobacter sp. (strain 638).